Consider the following 419-residue polypeptide: Monooxygenase CTB7 (419 aa).

This sequence belongs to the aromatic-ring hydroxylase family. KMO subfamily.

Its pathway is mycotoxin biosynthesis. Functionally, monooxygenase; part of the gene cluster that mediates the biosynthesis of cercosporin, a light-activated, non-host-selective toxin. The perylenequinone chromophore of cercosporin absorbs light energy to attain an electronically-activated triplet state and produces active oxygen species such as the hydroxyl radical, superoxide, hydrogen peroxide or singlet oxygen upon reaction with oxygen molecules. These reactive oxygen species cause damage to various cellular components including lipids, proteins and nucleic acids. The first step of cercosporin biosynthesis is performed by the polyketide synthase CTB1 which catalyzes the formation of nor-toralactone. The starter unit acyltransferase (SAT) domain of CTB1 initiates polyketide extension by the selective utilization of acetyl-CoA, which is elongated to the heptaketide in the beta-ketoacyl synthase (KS) domain by successive condensations with six malonyl units introduced by the malonyl acyltransferase (MAT) domain. The product template (PT) domain catalyzes C4-C9 and C2-C11 aldol cyclizations and dehydrations to a trihydroxynaphthalene, which is thought to be delivered to the thioesterase (TE) domain for product release. The bifunctional enzyme CTB3 then methylates nor-toralactone to toralactone before conducting an unusual oxidative aromatic ring opening. The O-methyltransferase CTB2 further methylates the nascent OH-6 of the CBT3 product, blocking further oxidation at this site before the reductase CTB6 reduces the 2-oxopropyl ketone at position C7, giving naphthalene. The FAD-dependent monooxygenase CTB5 in concert with the multicopper oxidase CTB12 are responsible for homodimerization of naphthalene with CTB7 installing the dioxepine moiety, finally producing cercosporin. The fasciclin domain-containing protein CTB11 might act with CTB5 and CTB12 whereas the roles of CTB9 and CTB10 have still to be elucidated. The chain is Monooxygenase CTB7 from Cercospora beticola (Sugarbeet leaf spot fungus).